The sequence spans 40 residues: Allophycocyanin alpha-B chain (40 aa).

It belongs to the phycobiliprotein family. Heterodimer of an alpha and a beta chain. In terms of processing, contains one covalently linked bilin chromophore.

It localises to the cellular thylakoid membrane. In terms of biological role, light-harvesting photosynthetic bile pigment-protein from the phycobiliprotein complex. Allophycocyanin has a maximum absorption at approximately 650 nanometers. The protein is Allophycocyanin alpha-B chain of Mastigocladus laminosus (Fischerella sp.).